The sequence spans 239 residues: Exosome complex component Rrp41 (239 aa).

Residues 1–21 form a disordered region; sequence MEERPERLISEDGLRLDGRKP.

Belongs to the RNase PH family. Rrp41 subfamily. Component of the archaeal exosome complex. Forms a hexameric ring-like arrangement composed of 3 Rrp41-Rrp42 heterodimers. The hexameric ring associates with a trimer of Rrp4 and/or Csl4 subunits.

It is found in the cytoplasm. Its function is as follows. Catalytic component of the exosome, which is a complex involved in RNA degradation. Has 3'-&gt;5' exoribonuclease activity. Can also synthesize heteromeric RNA-tails. This is Exosome complex component Rrp41 from Methanopyrus kandleri (strain AV19 / DSM 6324 / JCM 9639 / NBRC 100938).